The chain runs to 824 residues: Leucine--tRNA ligase (824 aa).

A 'HIGH' region motif is present at residues 41–51 (PYPSGTLHVGH). Positions 580–584 (KMSKS) match the 'KMSKS' region motif. K583 contacts ATP.

This sequence belongs to the class-I aminoacyl-tRNA synthetase family.

The protein localises to the cytoplasm. It catalyses the reaction tRNA(Leu) + L-leucine + ATP = L-leucyl-tRNA(Leu) + AMP + diphosphate. This is Leucine--tRNA ligase from Thermotoga maritima (strain ATCC 43589 / DSM 3109 / JCM 10099 / NBRC 100826 / MSB8).